The chain runs to 435 residues: 3-phosphoshikimate 1-carboxyvinyltransferase (435 aa).

Lys-15, Ser-16, and Arg-20 together coordinate 3-phosphoshikimate. Residue Lys-15 participates in phosphoenolpyruvate binding. Gly-96 and Arg-124 together coordinate phosphoenolpyruvate. The 3-phosphoshikimate site is built by Ser-169, Gln-171, Ser-195, Asp-319, and Lys-346. Gln-171 provides a ligand contact to phosphoenolpyruvate. Asp-319 functions as the Proton acceptor in the catalytic mechanism. Positions 350 and 395 each coordinate phosphoenolpyruvate.

The protein belongs to the EPSP synthase family. As to quaternary structure, monomer.

The protein resides in the cytoplasm. The enzyme catalyses 3-phosphoshikimate + phosphoenolpyruvate = 5-O-(1-carboxyvinyl)-3-phosphoshikimate + phosphate. It functions in the pathway metabolic intermediate biosynthesis; chorismate biosynthesis; chorismate from D-erythrose 4-phosphate and phosphoenolpyruvate: step 6/7. Its function is as follows. Catalyzes the transfer of the enolpyruvyl moiety of phosphoenolpyruvate (PEP) to the 5-hydroxyl of shikimate-3-phosphate (S3P) to produce enolpyruvyl shikimate-3-phosphate and inorganic phosphate. This Chlorobium phaeobacteroides (strain BS1) protein is 3-phosphoshikimate 1-carboxyvinyltransferase.